A 274-amino-acid chain; its full sequence is 3-methyl-2-oxobutanoate hydroxymethyltransferase (274 aa).

Positions 54 and 93 each coordinate Mg(2+). 3-methyl-2-oxobutanoate-binding positions include 54 to 55, aspartate 93, and lysine 121; that span reads DS. Glutamate 123 provides a ligand contact to Mg(2+). The active-site Proton acceptor is the glutamate 190.

Belongs to the PanB family. Homodecamer; pentamer of dimers. Mg(2+) is required as a cofactor.

Its subcellular location is the cytoplasm. The enzyme catalyses 3-methyl-2-oxobutanoate + (6R)-5,10-methylene-5,6,7,8-tetrahydrofolate + H2O = 2-dehydropantoate + (6S)-5,6,7,8-tetrahydrofolate. It functions in the pathway cofactor biosynthesis; (R)-pantothenate biosynthesis; (R)-pantoate from 3-methyl-2-oxobutanoate: step 1/2. In terms of biological role, catalyzes the reversible reaction in which hydroxymethyl group from 5,10-methylenetetrahydrofolate is transferred onto alpha-ketoisovalerate to form ketopantoate. This Ralstonia nicotianae (strain ATCC BAA-1114 / GMI1000) (Ralstonia solanacearum) protein is 3-methyl-2-oxobutanoate hydroxymethyltransferase.